Consider the following 106-residue polypeptide: COX assembly mitochondrial protein homolog (106 aa).

A2 carries the N-acetylalanine modification. One can recognise a CHCH domain in the interval 28–71 (RERCSEQVEDFTRCCKDSGILMVLKCRKENSALKDCLTAYYNDP). 2 short sequence motifs (cx9C motif) span residues 31-41 (CSEQVEDFTRC) and 53-63 (CRKENSALKDC). 2 disulfide bridges follow: C31/C63 and C41/C53.

This sequence belongs to the CMC family. Component of the MITRAC (mitochondrial translation regulation assembly intermediate of cytochrome c oxidase complex) complex, the core components of this complex being COA3/MITRAC12 and COX14.

The protein localises to the mitochondrion. Component of the MITRAC (mitochondrial translation regulation assembly intermediate of cytochrome c oxidase complex) complex, that regulates cytochrome c oxidase assembly. This chain is COX assembly mitochondrial protein homolog (Cmc1), found in Mus musculus (Mouse).